Reading from the N-terminus, the 102-residue chain is Small ribosomal subunit protein uS10 (102 aa).

Belongs to the universal ribosomal protein uS10 family. In terms of assembly, part of the 30S ribosomal subunit.

In terms of biological role, involved in the binding of tRNA to the ribosomes. The polypeptide is Small ribosomal subunit protein uS10 (Rhodospirillum centenum (strain ATCC 51521 / SW)).